Reading from the N-terminus, the 236-residue chain is LexA repressor (236 aa).

The segment at residues 26–46 (FDEMKEALDLRSKSGIHRLIT) is a DNA-binding region (H-T-H motif). Residues serine 157 and lysine 195 each act as for autocatalytic cleavage activity in the active site.

It belongs to the peptidase S24 family. Homodimer.

The enzyme catalyses Hydrolysis of Ala-|-Gly bond in repressor LexA.. Represses a number of genes involved in the response to DNA damage (SOS response), including recA and lexA. In the presence of single-stranded DNA, RecA interacts with LexA causing an autocatalytic cleavage which disrupts the DNA-binding part of LexA, leading to derepression of the SOS regulon and eventually DNA repair. This Azorhizobium caulinodans (strain ATCC 43989 / DSM 5975 / JCM 20966 / LMG 6465 / NBRC 14845 / NCIMB 13405 / ORS 571) protein is LexA repressor.